The primary structure comprises 423 residues: Galactosylceramide sulfotransferase (423 aa).

Over 1-14 (MPLPQKKRWESMAK) the chain is Cytoplasmic. Residues 15–35 (GLVLGALFTSFLLLLYSYAVP) form a helical; Signal-anchor for type II membrane protein membrane-spanning segment. The Lumenal portion of the chain corresponds to 36–423 (PLYTGLASTT…WKFIRDFLRW (388 aa)). A disordered region spans residues 48–70 (GAAPCSPAPREPEAPTSANGSAG). N-linked (GlcNAc...) asparagine glycans are attached at residues Asn-66, Asn-156, and Asn-312.

Belongs to the galactose-3-O-sulfotransferase family.

It localises to the golgi apparatus membrane. It catalyses the reaction a beta-D-galactosyl-(1&lt;-&gt;1')-N-acylsphing-4-enine + 3'-phosphoadenylyl sulfate = an N-acyl-1-beta-D-(3-O-sulfo)-galactosyl-sphing-4-enine + adenosine 3',5'-bisphosphate + H(+). The catalysed reaction is a 1-O-alkyl-2-acyl-3-O-(beta-D-galactosyl)-sn-glycerol + 3'-phosphoadenylyl sulfate = a 1-O-alkyl-2-acyl-3-(beta-D-3-sulfogalactosyl)-sn-glycerol + adenosine 3',5'-bisphosphate + H(+). The enzyme catalyses a beta-D-Gal-(1&lt;-&gt;1')-ceramide + 3'-phosphoadenylyl sulfate = 1-(3-O-sulfo-beta-D-galactosyl)-ceramide + adenosine 3',5'-bisphosphate + H(+). It carries out the reaction a 1,2-diacyl-3-O-(beta-D-galactosyl)-sn-glycerol + 3'-phosphoadenylyl sulfate = 1,2-diacyl-3-(3-O-sulfo-beta-D-galactosyl)-sn-glycerol + adenosine 3',5'-bisphosphate + H(+). It catalyses the reaction a beta-D-Gal-(1-&gt;4)-beta-D-Glc-(1&lt;-&gt;1)-Cer(d18:1(4E)) + 3'-phosphoadenylyl sulfate = beta-D-3-sulfogalactosyl-(1-&gt;4)-beta-D-glucosyl-(1&lt;-&gt;1')-N-acylsphing-4-enine + adenosine 3',5'-bisphosphate + H(+). It participates in lipid metabolism; sphingolipid metabolism. Catalyzes the transfer of a sulfate group to position 3 of non-reducing beta-galactosyl residues in glycerolipids and sphingolipids, therefore participates in the biosynthesis of sulfoglycolipids. Catalyzes the synthesis of galactosylceramide sulfate (sulfatide), a major lipid component of the myelin sheath and of monogalactosylalkylacylglycerol sulfate (seminolipid), present in spermatocytes. Seems to prefer beta-glycosides at the non-reducing termini of sugar chains attached to a lipid moiety. Also acts on lactosylceramide, galactosyl 1-alkyl-2-sn-glycerol and galactosyl diacylglycerol (in vitro). The chain is Galactosylceramide sulfotransferase from Bos taurus (Bovine).